A 749-amino-acid polypeptide reads, in one-letter code: Phosphate-regulating neutral endopeptidase PHEX (749 aa).

The Cytoplasmic segment spans residues 1–20; the sequence is MEAETGSSVETGKKANRGTR. Residues 21-41 traverse the membrane as a helical; Signal-anchor for type II membrane protein segment; it reads IALVVFVGGTLVLGTILFLVS. At 42–641 the chain is on the extracellular side; sequence QGLLSLQAKQ…LNVKGKRTLG (600 aa). Residues 53-749 enclose the Peptidase M13 domain; that stretch reads YCLKPECIEA…NRGMDSCRLW (697 aa). Residues C54 and C59 are joined by a disulfide bond. 7 N-linked (GlcNAc...) asparagine glycosylation sites follow: N71, N238, N263, N290, N301, N377, and N484. Cystine bridges form between C77/C733, C85/C693, C142/C406, and C617/C746. H580 contributes to the Zn(2+) binding site. The active site involves E581. Residues H584 and E642 each coordinate Zn(2+). D646 acts as the Proton donor in catalysis. N-linked (GlcNAc...) asparagine glycosylation occurs at N736.

It belongs to the peptidase M13 family. As to quaternary structure, interacts with MEPE; the interaction is zinc-dependent (via ASARM motif). Zn(2+) is required as a cofactor. As to expression, specifically expressed in ovary. Expressed at low levels in kidney.

It is found in the cell membrane. In terms of biological role, peptidase that cleaves SIBLING (small integrin-binding ligand, N-linked glycoprotein)-derived ASARM peptides, thus regulating their biological activity. Cleaves ASARM peptides between Ser and Glu or Asp residues. Regulates osteogenic cell differentiation and bone mineralization through the cleavage of the MEPE-derived ASARM peptide. Promotes dentin mineralization and renal phosphate reabsorption by cleaving DMP1- and MEPE-derived ASARM peptides. Inhibits the cleavage of MEPE by CTSB/cathepsin B thus preventing MEPE degradation. This is Phosphate-regulating neutral endopeptidase PHEX (PHEX) from Homo sapiens (Human).